Here is a 521-residue protein sequence, read N- to C-terminus: MDNDSQYSGYSYKSGHSRSSRKHRDRRERHRSKSREGSRGDKSVTIQAPGEPLLDNESTRGEDRDDNWGETTTVVTGTSEHSISHDDITRITKDMEDSAKLDCSRHLGVVIGGALALLSFLTPIAFMLLPQILWREDLEQCGTACEGLFISVAFKLLILLLGSWALFFRRPKAFFPRVFVFRALLMVLVFLLVVSYWLFYGVRILESRDKNYQGIVQYAVSLVDALLFVHYLAVVLLELRQLQPQFTIKVVRSTDGASRFYNIGHLSIQRVAVWILENYYHDFPVYNPALLNLPKSILSKKMSGFKVYSLGEENTTNNSTGQSRAVIAAAARRRDNSHNEYYYEEAEHERRVRKRKARLVVAVEEAFTHIKRLQDEDQKNPREIMDPREAAQAIFASMARAMQKYLRTTKQQPYHTMESILHHLEFCITHDMTPKAFLERYLGPGPTIQYHKDRWLAKQWTLVSEEPVTNGLKDGVVFVLKRQDFSLVVSTKKIPFFKLSEEFVDPKSHKFVMRLQSETSV.

Residues 1-81 (MDNDSQYSGY…TTVVTGTSEH (81 aa)) are disordered. The Cytoplasmic portion of the chain corresponds to 1 to 108 (MDNDSQYSGY…AKLDCSRHLG (108 aa)). Positions 15–33 (GHSRSSRKHRDRRERHRSK) are enriched in basic residues. A compositionally biased stretch (basic and acidic residues) spans 57-67 (ESTRGEDRDDN). A compositionally biased stretch (low complexity) spans 69 to 81 (GETTTVVTGTSEH). A helical membrane pass occupies residues 109-129 (VVIGGALALLSFLTPIAFMLL). Residues 130–147 (PQILWREDLEQCGTACEG) lie on the Extracellular side of the membrane. Residues 148 to 168 (LFISVAFKLLILLLGSWALFF) form a helical membrane-spanning segment. The Cytoplasmic portion of the chain corresponds to 169-178 (RRPKAFFPRV). The helical transmembrane segment at 179 to 199 (FVFRALLMVLVFLLVVSYWLF) threads the bilayer. Over 200–218 (YGVRILESRDKNYQGIVQY) the chain is Extracellular. The helical transmembrane segment at 219 to 239 (AVSLVDALLFVHYLAVVLLEL) threads the bilayer. The Cytoplasmic segment spans residues 240 to 521 (RQLQPQFTIK…VMRLQSETSV (282 aa)). The short motif at 518–521 (ETSV) is the PDZ-binding element.

Belongs to the Vang family. As to quaternary structure, interacts with dvl/dsh. Interacts with prickle3. In terms of tissue distribution, during gastrulation, broadly expressed throughout the marginal zone and animal cap region. From the neurula stages, expression becomes concentrated in neural tissues, in the neural plate and neural tube.

The protein resides in the cell membrane. Functionally, has a role in non-canonical Wnt/planar cell polarity (PCP) signaling; can recruit dvl/dsh and prickle from the cytoplasm to the plasma membrane. Acts in a PCP complex to regulate the polarized assembly of fibronectrin on the surface of the mesoderm during gastrulation. Regulates convergent extension cell movements in both dorsal mesoderm and neural tissue during gastrulation, without affecting cell fate. Regulates neural fold closure during neurulation. May be required for cell surface localization of fzd3 and fzd6 in the inner ear. This chain is Vang-like protein 2-A (vangl2-a), found in Xenopus laevis (African clawed frog).